A 365-amino-acid chain; its full sequence is Pyridoxal reductase, chloroplastic (365 aa).

A chloroplast-targeting transit peptide spans 1 to 15 (MALTLSTTKTFTNIN). Residue Tyr94 is the Proton donor of the active site.

It belongs to the aldo/keto reductase family. In terms of assembly, monomer. As to expression, expressed in cotyledons, embryos, flowers, shoots, roots and seeds.

The protein resides in the plastid. It localises to the chloroplast. The catalysed reaction is pyridoxine + NADP(+) = pyridoxal + NADPH + H(+). The protein operates within cofactor degradation; B6 vitamer degradation; pyridoxal from pyridoxine (dehydrogenase route): step 1/1. Functionally, catalyzes the reduction of pyridoxal (PL) with NADPH and oxidation of pyridoxine (PN) with NADP(+). Involved in the PLP salvage pathway. This is Pyridoxal reductase, chloroplastic (PLR1) from Arabidopsis thaliana (Mouse-ear cress).